The following is a 359-amino-acid chain: Alanine racemase (359 aa).

Lys35 functions as the Proton acceptor; specific for D-alanine in the catalytic mechanism. At Lys35 the chain carries N6-(pyridoxal phosphate)lysine. Arg130 contacts substrate. Tyr255 (proton acceptor; specific for L-alanine) is an active-site residue. Met303 is a substrate binding site.

It belongs to the alanine racemase family. Requires pyridoxal 5'-phosphate as cofactor.

The catalysed reaction is L-alanine = D-alanine. It participates in amino-acid biosynthesis; D-alanine biosynthesis; D-alanine from L-alanine: step 1/1. In terms of biological role, catalyzes the interconversion of L-alanine and D-alanine. May also act on other amino acids. In Janthinobacterium sp. (strain Marseille) (Minibacterium massiliensis), this protein is Alanine racemase (alr).